The sequence spans 255 residues: Hydroxyacylglutathione hydrolase (255 aa).

7 residues coordinate Zn(2+): histidine 56, histidine 58, aspartate 60, histidine 61, histidine 114, aspartate 133, and histidine 171.

This sequence belongs to the metallo-beta-lactamase superfamily. Glyoxalase II family. In terms of assembly, monomer. Requires Zn(2+) as cofactor.

The enzyme catalyses an S-(2-hydroxyacyl)glutathione + H2O = a 2-hydroxy carboxylate + glutathione + H(+). Its pathway is secondary metabolite metabolism; methylglyoxal degradation; (R)-lactate from methylglyoxal: step 2/2. In terms of biological role, thiolesterase that catalyzes the hydrolysis of S-D-lactoyl-glutathione to form glutathione and D-lactic acid. The chain is Hydroxyacylglutathione hydrolase from Rhodopseudomonas palustris (strain BisB5).